Consider the following 438-residue polypeptide: Diaminopimelate decarboxylase (438 aa).

K73 is subject to N6-(pyridoxal phosphate)lysine. Pyridoxal 5'-phosphate contacts are provided by residues S217, G254, and 294–297 (EPGR). Substrate contacts are provided by R297, R333, and Y337. The active-site Proton donor is C362. 2 residues coordinate substrate: E363 and Y391. Y391 contributes to the pyridoxal 5'-phosphate binding site.

It belongs to the Orn/Lys/Arg decarboxylase class-II family. LysA subfamily. As to quaternary structure, homodimer. Pyridoxal 5'-phosphate is required as a cofactor.

The catalysed reaction is meso-2,6-diaminopimelate + H(+) = L-lysine + CO2. The protein operates within amino-acid biosynthesis; L-lysine biosynthesis via DAP pathway; L-lysine from DL-2,6-diaminopimelate: step 1/1. Its activity is regulated as follows. Competitively inhibited by the substrate analog azelaic acid in vitro but not in vivo. Specifically catalyzes the decarboxylation of meso-diaminopimelate (meso-DAP) to L-lysine. In Methanocaldococcus jannaschii (strain ATCC 43067 / DSM 2661 / JAL-1 / JCM 10045 / NBRC 100440) (Methanococcus jannaschii), this protein is Diaminopimelate decarboxylase.